Reading from the N-terminus, the 348-residue chain is Centromere protein L (348 aa).

It belongs to the CENP-L/IML3 family.

The protein localises to the nucleus. It localises to the chromosome. The protein resides in the centromere. In terms of biological role, probable component of a centromeric complex involved in assembly of kinetochore proteins, mitotic progression and chromosome segregation. The chain is Centromere protein L (cenpl) from Xenopus tropicalis (Western clawed frog).